Here is a 339-residue protein sequence, read N- to C-terminus: Ketol-acid reductoisomerase (NADP(+)) (339 aa).

One can recognise a KARI N-terminal Rossmann domain in the interval 1-182 (MRVYYDRDAD…GGGRAGVIET (182 aa)). NADP(+) is bound by residues 24 to 27 (YGSQ), R48, S51, T53, and 83 to 86 (DELQ). H108 is a catalytic residue. G134 lines the NADP(+) pocket. Positions 183 to 328 (TFKEECETDL…KKLRSMMPWI (146 aa)) constitute a KARI C-terminal knotted domain. 4 residues coordinate Mg(2+): D191, E195, E227, and E231. S252 provides a ligand contact to substrate.

Belongs to the ketol-acid reductoisomerase family. The cofactor is Mg(2+).

The enzyme catalyses (2R)-2,3-dihydroxy-3-methylbutanoate + NADP(+) = (2S)-2-acetolactate + NADPH + H(+). It carries out the reaction (2R,3R)-2,3-dihydroxy-3-methylpentanoate + NADP(+) = (S)-2-ethyl-2-hydroxy-3-oxobutanoate + NADPH + H(+). Its pathway is amino-acid biosynthesis; L-isoleucine biosynthesis; L-isoleucine from 2-oxobutanoate: step 2/4. It functions in the pathway amino-acid biosynthesis; L-valine biosynthesis; L-valine from pyruvate: step 2/4. In terms of biological role, involved in the biosynthesis of branched-chain amino acids (BCAA). Catalyzes an alkyl-migration followed by a ketol-acid reduction of (S)-2-acetolactate (S2AL) to yield (R)-2,3-dihydroxy-isovalerate. In the isomerase reaction, S2AL is rearranged via a Mg-dependent methyl migration to produce 3-hydroxy-3-methyl-2-ketobutyrate (HMKB). In the reductase reaction, this 2-ketoacid undergoes a metal-dependent reduction by NADPH to yield (R)-2,3-dihydroxy-isovalerate. The chain is Ketol-acid reductoisomerase (NADP(+)) from Bartonella tribocorum (strain CIP 105476 / IBS 506).